Reading from the N-terminus, the 444-residue chain is Platelet-activating factor acetylhydrolase (444 aa).

The signal sequence occupies residues Met1–Pro21. N-linked (GlcNAc...) asparagine glycosylation is found at Asn60 and Asn200. Residue Ser274 is the Nucleophile of the active site. Active-site charge relay system residues include Asp297 and His352. The N-linked (GlcNAc...) asparagine glycan is linked to Asn424.

The protein belongs to the AB hydrolase superfamily. Lipase family. In terms of processing, N-glycosylated. Plasma.

It localises to the secreted. It is found in the extracellular space. It catalyses the reaction a 1-O-alkyl-2-acetyl-sn-glycero-3-phosphocholine + H2O = a 1-O-alkyl-sn-glycero-3-phosphocholine + acetate + H(+). The enzyme catalyses 1-O-decyl-2-acetyl-sn-glycero-3-phosphocholine + H2O = 1-O-decyl-sn-glycero-3-phosphocholine + acetate + H(+). The catalysed reaction is 1-O-dodecyl-2-acetyl-sn-glycero-3-phosphocholine + H2O = 1-O-dodecyl-sn-glycero-3-phosphocholine + acetate + H(+). It carries out the reaction 1-O-tetradecyl-2-acetyl-sn-glycero-3-phosphocholine + H2O = 1-O-tetradecyl-sn-glycero-3-phosphocholine + acetate + H(+). It catalyses the reaction 1-O-hexadecyl-2-acetyl-sn-glycero-3-phosphocholine + H2O = 1-O-hexadecyl-sn-glycero-3-phosphocholine + acetate + H(+). The enzyme catalyses 1-O-octadecyl-2-acetyl-sn-glycero-3-phosphocholine + H2O = 1-O-octadecyl-sn-glycero-3-phosphocholine + acetate + H(+). The catalysed reaction is 1-hexadecanoyl-2-acetyl-sn-glycero-3-phosphocholine + H2O = 1-hexadecanoyl-sn-glycero-3-phosphocholine + acetate + H(+). It carries out the reaction 1-hexadecanoyl-2-propionyl-sn-glycero-3-phosphocholine + H2O = propanoate + 1-hexadecanoyl-sn-glycero-3-phosphocholine + H(+). It catalyses the reaction 1-hexadecanoyl-2-butanoyl-sn-glycero-3-phosphocholine + H2O = butanoate + 1-hexadecanoyl-sn-glycero-3-phosphocholine + H(+). The enzyme catalyses 1-hexadecanoyl-2-pentanoyl-sn-glycero-3-phosphocholine + H2O = pentanoate + 1-hexadecanoyl-sn-glycero-3-phosphocholine + H(+). The catalysed reaction is 1-hexadecanoyl-2-glutaroyl-sn-glycero-3-phosphocholine + H2O = glutarate + 1-hexadecanoyl-sn-glycero-3-phosphocholine + H(+). It carries out the reaction 1-hexadecanoyl-2-(5-oxopentanoyl)-sn-glycero-3-phosphocholine + H2O = 5-oxopentanoate + 1-hexadecanoyl-sn-glycero-3-phosphocholine + H(+). It catalyses the reaction 1-hexadecanoyl-2-(9-oxononanoyl)-sn-glycero-3-phosphocholine + H2O = 9-oxononanoate + 1-hexadecanoyl-sn-glycero-3-phosphocholine + H(+). The enzyme catalyses 1-hexadecanoyl-2-[9-hydroperoxy-(10E-octadecenoyl)]-sn-glycero-3-phosphocholine + H2O = 9-hydroperoxy-10E-octadecenoate + 1-hexadecanoyl-sn-glycero-3-phosphocholine + H(+). The catalysed reaction is 1-hexadecanoyl-2-(10-hydroperoxy-8E-octadecenoyl)-sn-glycero-3-phosphocholine + H2O = 10-hydroperoxy-(8E)-octadecenoate + 1-hexadecanoyl-sn-glycero-3-phosphocholine + H(+). Functionally, lipoprotein-associated calcium-independent phospholipase A2 involved in phospholipid catabolism during inflammatory and oxidative stress response. At the lipid-aqueous interface, hydrolyzes the ester bond of fatty acyl group attached at sn-2 position of phospholipids (phospholipase A2 activity). Specifically targets phospholipids with a short-chain fatty acyl group at sn-2 position. Can hydrolyze phospholipids with long fatty acyl chains, only if they carry oxidized functional groups. Hydrolyzes and inactivates platelet-activating factor (PAF, 1-O-alkyl-2-acetyl-sn-glycero-3-phosphocholine), a potent pro-inflammatory signaling lipid that acts through PTAFR on various innate immune cells. Hydrolyzes oxidatively truncated phospholipids carrying an aldehyde group at omega position, preventing their accumulation in low-density lipoprotein (LDL) particles and uncontrolled pro-inflammatory effects. As part of high-density lipoprotein (HDL) particles, can hydrolyze phospholipids having long-chain fatty acyl hydroperoxides at sn-2 position and protect against potential accumulation of these oxylipins in the vascular wall. Catalyzes the release from membrane phospholipids of F2-isoprostanes, lipid biomarkers of cellular oxidative damage. The protein is Platelet-activating factor acetylhydrolase (PLA2G7) of Canis lupus familiaris (Dog).